Reading from the N-terminus, the 467-residue chain is Dynactin subunit 4 (467 aa).

An N-acetylalanine modification is found at alanine 2. A coiled-coil region spans residues 152–172; the sequence is QQLAQKEKVERDRKKLARRRN. Serine 203 carries the phosphoserine modification. A Glycyl lysine isopeptide (Lys-Gly) (interchain with G-Cter in SUMO2) cross-link involves residue lysine 222. A Phosphothreonine modification is found at threonine 414.

Belongs to the dynactin subunit 4 family. As to quaternary structure, subunit of dynactin, a multiprotein complex part of a tripartite complex with dynein and a adapter, such as BICDL1, BICD2 or HOOK3. The dynactin complex is built around ACTR1A/ACTB filament and consists of an actin-related filament composed of a shoulder domain, a pointed end and a barbed end. Its length is defined by its flexible shoulder domain. The soulder is composed of 2 DCTN1 subunits, 4 DCTN2 and 2 DCTN3. The 4 DCNT2 (via N-terminus) bind the ACTR1A filament and act as molecular rulers to determine the length. The pointed end is important for binding dynein-dynactin cargo adapters. Consists of 4 subunits: ACTR10, DCNT4, DCTN5 and DCTN6. The barbed end is composed of a CAPZA1:CAPZB heterodimers, which binds ACTR1A/ACTB filament and dynactin and stabilizes dynactin. Interacts with ATP7B, but not ATP7A, in a copper-dependent manner. Interacts with ANK2; this interaction is required for localization at costameres. Interacts with N4BP2L1.

It is found in the cytoplasm. The protein localises to the cytoskeleton. Its subcellular location is the microtubule organizing center. It localises to the centrosome. The protein resides in the stress fiber. It is found in the cell cortex. The protein localises to the myofibril. Its subcellular location is the sarcomere. Its function is as follows. Part of the dynactin complex that activates the molecular motor dynein for ultra-processive transport along microtubules. The polypeptide is Dynactin subunit 4 (Dctn4) (Mus musculus (Mouse)).